Here is a 202-residue protein sequence, read N- to C-terminus: Pyridoxal 5'-phosphate synthase subunit PdxT (202 aa).

49 to 51 (GES) serves as a coordination point for L-glutamine. Residue Cys-81 is the Nucleophile of the active site. L-glutamine is bound by residues Arg-110 and 139-140 (IR). Catalysis depends on charge relay system residues His-182 and Glu-184.

It belongs to the glutaminase PdxT/SNO family. In the presence of PdxS, forms a dodecamer of heterodimers. Only shows activity in the heterodimer.

The catalysed reaction is aldehydo-D-ribose 5-phosphate + D-glyceraldehyde 3-phosphate + L-glutamine = pyridoxal 5'-phosphate + L-glutamate + phosphate + 3 H2O + H(+). The enzyme catalyses L-glutamine + H2O = L-glutamate + NH4(+). It participates in cofactor biosynthesis; pyridoxal 5'-phosphate biosynthesis. Catalyzes the hydrolysis of glutamine to glutamate and ammonia as part of the biosynthesis of pyridoxal 5'-phosphate. The resulting ammonia molecule is channeled to the active site of PdxS. This is Pyridoxal 5'-phosphate synthase subunit PdxT from Rhodococcus opacus (strain B4).